The sequence spans 254 residues: 4-hydroxy-tetrahydrodipicolinate reductase (254 aa).

NAD(+) is bound at residue 7–12 (GASGRI). R35 is a binding site for NADP(+). NAD(+)-binding positions include 91 to 93 (GTT) and 115 to 118 (AHNM). Residue H147 is the Proton donor/acceptor of the active site. H148 lines the (S)-2,3,4,5-tetrahydrodipicolinate pocket. The Proton donor role is filled by K151. Position 157–158 (157–158 (GT)) interacts with (S)-2,3,4,5-tetrahydrodipicolinate.

Belongs to the DapB family.

The protein resides in the cytoplasm. The enzyme catalyses (S)-2,3,4,5-tetrahydrodipicolinate + NAD(+) + H2O = (2S,4S)-4-hydroxy-2,3,4,5-tetrahydrodipicolinate + NADH + H(+). It catalyses the reaction (S)-2,3,4,5-tetrahydrodipicolinate + NADP(+) + H2O = (2S,4S)-4-hydroxy-2,3,4,5-tetrahydrodipicolinate + NADPH + H(+). Its pathway is amino-acid biosynthesis; L-lysine biosynthesis via DAP pathway; (S)-tetrahydrodipicolinate from L-aspartate: step 4/4. Functionally, catalyzes the conversion of 4-hydroxy-tetrahydrodipicolinate (HTPA) to tetrahydrodipicolinate. The protein is 4-hydroxy-tetrahydrodipicolinate reductase of Helicobacter pylori (strain Shi470).